A 115-amino-acid chain; its full sequence is Hydrogenase maturation factor HypA (115 aa).

Residue His-2 coordinates Ni(2+). Cys-73, Cys-76, Cys-89, and Cys-92 together coordinate Zn(2+).

Belongs to the HypA/HybF family.

In terms of biological role, involved in the maturation of [NiFe] hydrogenases. Required for nickel insertion into the metal center of the hydrogenase. The protein is Hydrogenase maturation factor HypA of Parabacteroides distasonis (strain ATCC 8503 / DSM 20701 / CIP 104284 / JCM 5825 / NCTC 11152).